The chain runs to 23 residues: U1-poneritoxin-Da3b (23 aa).

Belongs to the non-disulfide-bridged peptide (NDBP) superfamily. Medium-length antimicrobial peptide (group 3) family. Ponericin-W subfamily. Expressed by the venom gland.

It is found in the secreted. It localises to the target cell membrane. In terms of biological role, may have antimicrobial properties, like most ant linear peptides. May act by disrupting the integrity of the bacterial cell membrane. This chain is U1-poneritoxin-Da3b, found in Dinoponera australis (Giant neotropical hunting ant).